Consider the following 490-residue polypeptide: N-succinylglutamate 5-semialdehyde dehydrogenase (490 aa).

Residue 223-228 (GSAGTG) coordinates NAD(+). Active-site residues include E246 and C280.

The protein belongs to the aldehyde dehydrogenase family. AstD subfamily.

It carries out the reaction N-succinyl-L-glutamate 5-semialdehyde + NAD(+) + H2O = N-succinyl-L-glutamate + NADH + 2 H(+). It participates in amino-acid degradation; L-arginine degradation via AST pathway; L-glutamate and succinate from L-arginine: step 4/5. Its function is as follows. Catalyzes the NAD-dependent reduction of succinylglutamate semialdehyde into succinylglutamate. The protein is N-succinylglutamate 5-semialdehyde dehydrogenase of Serratia proteamaculans (strain 568).